The chain runs to 169 residues: MICOS complex subunit MIC19 (169 aa).

Gly2 carries N-myristoyl glycine lipidation. In terms of domain architecture, CHCH spans 123–165; that stretch reads ENVCQDNENEIVRCLQENPGRVLKCAPLTEAFEKCVGEFRQQV. Short sequence motifs (cx9C motif) lie at residues 126 to 136 and 147 to 157; these read CQDNENEIVRC and CAPLTEAFEKC. 2 disulfides stabilise this stretch: Cys126–Cys157 and Cys136–Cys147.

This sequence belongs to the MICOS complex subunit Mic19 family. Metazoan Mic19 subfamily. As to quaternary structure, component of the mitochondrial contact site and cristae organizing system (MICOS) complex.

The protein localises to the mitochondrion inner membrane. Functionally, plays a role in maintaining mitochondrial morphology. May act as a component of the MICOS complex, a large protein complex of the mitochondria. This Caenorhabditis elegans protein is MICOS complex subunit MIC19.